The chain runs to 481 residues: Alkaline protease secretion protein AprF (481 aa).

Residues 462-481 form a disordered region; sequence PAPLHTLSKTDTEENRSALN. The segment covering 469–481 has biased composition (basic and acidic residues); sequence SKTDTEENRSALN.

The protein belongs to the outer membrane factor (OMF) (TC 1.B.17) family.

It localises to the cell outer membrane. In terms of biological role, involved in the secretion of alkaline protease. This chain is Alkaline protease secretion protein AprF (aprF), found in Pseudomonas aeruginosa (strain ATCC 15692 / DSM 22644 / CIP 104116 / JCM 14847 / LMG 12228 / 1C / PRS 101 / PAO1).